Here is a 556-residue protein sequence, read N- to C-terminus: 2-succinyl-5-enolpyruvyl-6-hydroxy-3-cyclohexene-1-carboxylate synthase (556 aa).

It belongs to the TPP enzyme family. MenD subfamily. In terms of assembly, homodimer. Mg(2+) is required as a cofactor. Requires Mn(2+) as cofactor. It depends on thiamine diphosphate as a cofactor.

It carries out the reaction isochorismate + 2-oxoglutarate + H(+) = 5-enolpyruvoyl-6-hydroxy-2-succinyl-cyclohex-3-ene-1-carboxylate + CO2. The protein operates within quinol/quinone metabolism; 1,4-dihydroxy-2-naphthoate biosynthesis; 1,4-dihydroxy-2-naphthoate from chorismate: step 2/7. Its pathway is quinol/quinone metabolism; menaquinone biosynthesis. In terms of biological role, catalyzes the thiamine diphosphate-dependent decarboxylation of 2-oxoglutarate and the subsequent addition of the resulting succinic semialdehyde-thiamine pyrophosphate anion to isochorismate to yield 2-succinyl-5-enolpyruvyl-6-hydroxy-3-cyclohexene-1-carboxylate (SEPHCHC). In Salmonella paratyphi B (strain ATCC BAA-1250 / SPB7), this protein is 2-succinyl-5-enolpyruvyl-6-hydroxy-3-cyclohexene-1-carboxylate synthase.